The sequence spans 350 residues: Inner membrane protein YhiM (350 aa).

The Cytoplasmic portion of the chain corresponds to 1-2 (MN). A helical transmembrane segment spans residues 3–23 (IYIGWLFKLIPLIMGLICIAL). Residues 24 to 41 (GGFVLESSGQSEYFVAGH) are Periplasmic-facing. Residues 42 to 62 (VLISLAAICLALFTTAFIIIS) form a helical membrane-spanning segment. Topologically, residues 63–74 (QLTRGVNTFYNT) are cytoplasmic. A helical transmembrane segment spans residues 75–95 (LFPIIGYAGSIITMIWGWALL). Over 96–104 (AGNDVMADE) the chain is Periplasmic. Residues 105-125 (FVAGHVIFGVGMIAACVSTVA) form a helical membrane-spanning segment. At 126–157 (ASSGHFLLIPKNAAGSKSDGTPVQAYSSLIGN) the chain is on the cytoplasmic side. Residues 158–178 (CLIAVPVLLTLLGFIWSITLL) form a helical membrane-spanning segment. Residues 179-190 (RSADITPHYVAG) are Periplasmic-facing. Residues 191 to 211 (HVLLGLTAICACLIGLVATIV) traverse the membrane as a helical segment. Residues 212 to 225 (HQTRNTFSTKEHWL) lie on the Cytoplasmic side of the membrane. A helical membrane pass occupies residues 226–246 (WCYWVIFLGSITVLQGIYVLV). Topologically, residues 247 to 257 (SSDASARLAPG) are periplasmic. A helical transmembrane segment spans residues 258–278 (IILICLGMICYSIFSKVWLLA). At 279–290 (LVWRRTCSLANR) the chain is on the cytoplasmic side. Residues 291-311 (IPMIPVFTCLFCLFLASFLAE) traverse the membrane as a helical segment. The Periplasmic portion of the chain corresponds to 312–324 (MAQTDMGYFIPSR). A helical membrane pass occupies residues 325–345 (VLVGLGAVCFTLFSIVSILEA). The Cytoplasmic segment spans residues 346 to 350 (GSAKK).

The protein resides in the cell inner membrane. The polypeptide is Inner membrane protein YhiM (yhiM) (Escherichia coli (strain K12)).